A 120-amino-acid chain; its full sequence is NAD(P)H-quinone oxidoreductase subunit 3, chloroplastic (120 aa).

3 consecutive transmembrane segments (helical) span residues 9–29 (IFWAFLIISSVIPILAFLISG), 64–84 (MFALVFVVFDVETVFLYPWAM), and 88–108 (VLGVSVFIEALIFVLIPIVGS).

Belongs to the complex I subunit 3 family. In terms of assembly, NDH is composed of at least 16 different subunits, 5 of which are encoded in the nucleus.

The protein resides in the plastid. Its subcellular location is the chloroplast thylakoid membrane. It carries out the reaction a plastoquinone + NADH + (n+1) H(+)(in) = a plastoquinol + NAD(+) + n H(+)(out). The catalysed reaction is a plastoquinone + NADPH + (n+1) H(+)(in) = a plastoquinol + NADP(+) + n H(+)(out). Functionally, NDH shuttles electrons from NAD(P)H:plastoquinone, via FMN and iron-sulfur (Fe-S) centers, to quinones in the photosynthetic chain and possibly in a chloroplast respiratory chain. The immediate electron acceptor for the enzyme in this species is believed to be plastoquinone. Couples the redox reaction to proton translocation, and thus conserves the redox energy in a proton gradient. This is NAD(P)H-quinone oxidoreductase subunit 3, chloroplastic from Liriodendron tulipifera (Tuliptree).